We begin with the raw amino-acid sequence, 98 residues long: uncharacterized protein (98 aa).

This is an uncharacterized protein from Thermotoga maritima (strain ATCC 43589 / DSM 3109 / JCM 10099 / NBRC 100826 / MSB8).